The chain runs to 545 residues: Chaperonin GroEL 2 (545 aa).

Residues 30 to 33, Lys-51, 87 to 91, Gly-415, and Asp-496 contribute to the ATP site; these read TLGP and DGTTT.

The protein belongs to the chaperonin (HSP60) family. Forms a cylinder of 14 subunits composed of two heptameric rings stacked back-to-back. Interacts with the co-chaperonin GroES.

It localises to the cytoplasm. It carries out the reaction ATP + H2O + a folded polypeptide = ADP + phosphate + an unfolded polypeptide.. Functionally, together with its co-chaperonin GroES, plays an essential role in assisting protein folding. The GroEL-GroES system forms a nano-cage that allows encapsulation of the non-native substrate proteins and provides a physical environment optimized to promote and accelerate protein folding. The protein is Chaperonin GroEL 2 of Nitrobacter winogradskyi (strain ATCC 25391 / DSM 10237 / CIP 104748 / NCIMB 11846 / Nb-255).